Here is a 353-residue protein sequence, read N- to C-terminus: MSLTYDPSETIYPFPQKPVPLSEQEKLTHVEKIKALLKEKDAVLVAHYYTDPEIQALAEETGGFVGDSLEMARFGNQHSAKTLIICGVRFMGESAKILTPEKNVLMPTLEAECSLDLGCPADKFSEFCDAHPDHTVVVYANTSAAVKARADWVVTSSIALEIVEHLDSEGKDIIWGPDRHLGAYIQKNTGAEMLLWQGECVVHDEFSAKALRDMKALYPDAAVLVHPESPASVVALADAVGSTSQLIKAAKELPNTKLIVATDKGIFFKMQQMVPDKELVEAPTAGAGATCRSCAHCPWMAMNGLKAIESALVEGGEKHEIFVDEALRVKSLIPLNRMLNFAAELQLKVKGNA.

Residues His-47 and Ser-68 each contribute to the iminosuccinate site. Residue Cys-113 coordinates [4Fe-4S] cluster. Residues 139–141 (YAN) and Ser-156 contribute to the iminosuccinate site. [4Fe-4S] cluster is bound at residue Cys-200. Residues 226–228 (HPE) and Thr-243 each bind iminosuccinate. Position 297 (Cys-297) interacts with [4Fe-4S] cluster.

This sequence belongs to the quinolinate synthase family. Type 1 subfamily. It depends on [4Fe-4S] cluster as a cofactor.

Its subcellular location is the cytoplasm. It carries out the reaction iminosuccinate + dihydroxyacetone phosphate = quinolinate + phosphate + 2 H2O + H(+). It participates in cofactor biosynthesis; NAD(+) biosynthesis; quinolinate from iminoaspartate: step 1/1. In terms of biological role, catalyzes the condensation of iminoaspartate with dihydroxyacetone phosphate to form quinolinate. This is Quinolinate synthase from Photobacterium profundum (strain SS9).